A 130-amino-acid chain; its full sequence is Large ribosomal subunit protein bL12 (130 aa).

Belongs to the bacterial ribosomal protein bL12 family. As to quaternary structure, homodimer. Part of the ribosomal stalk of the 50S ribosomal subunit. Forms a multimeric L10(L12)X complex, where L10 forms an elongated spine to which 2 to 4 L12 dimers bind in a sequential fashion. Binds GTP-bound translation factors.

Functionally, forms part of the ribosomal stalk which helps the ribosome interact with GTP-bound translation factors. Is thus essential for accurate translation. The sequence is that of Large ribosomal subunit protein bL12 from Herpetosiphon aurantiacus (strain ATCC 23779 / DSM 785 / 114-95).